The primary structure comprises 340 residues: Mitotic checkpoint protein BUB3.1 (340 aa).

A disordered region spans residues 1-20 (MTTVTPSAGRELSNPPSDGI). WD repeat units lie at residues 15-54 (PPSD…LKGE), 96-135 (THDK…GPER), 142-179 (LQPE…QPEQ), 239-278 (DIVY…RLYQ), and 281-324 (KYPT…RSVN).

Belongs to the WD repeat BUB3 family. As to quaternary structure, part of the mitotic checkpoint complex (MCC); interacts with CDC20-1 and CDC20-2. Interacts with MAD2 and BUBR1. In terms of tissue distribution, expressed in actively dividing tissues, early in organ development, in young leaves, lateral root primordia and root meristems, flower buds, flowers and siliques.

The protein resides in the nucleus. Its subcellular location is the chromosome. It is found in the centromere. It localises to the kinetochore. The protein localises to the cytoplasm. The protein resides in the cytoskeleton. Its subcellular location is the phragmoplast. It is found in the spindle. Has a dual function in spindle-assembly checkpoint signaling and in promoting the establishment of correct kinetochore-microtubule (K-MT) attachments. Promotes the formation of stable end-on bipolar attachments. Necessary for kinetochore localization of BUB1. The BUB1/BUB3 complex plays a role in the inhibition of anaphase-promoting complex or cyclosome (APC/C) when spindle-assembly checkpoint is activated and inhibits the ubiquitin ligase activity of APC/C by phosphorylating its activator CDC20. Essential for gametophyte development. This Arabidopsis thaliana (Mouse-ear cress) protein is Mitotic checkpoint protein BUB3.1 (BUB3.1).